A 194-amino-acid polypeptide reads, in one-letter code: CMRF35-like molecule 5 (194 aa).

The first 18 residues, 1 to 18 (MWLSPSLLLLILPGYSIA), serve as a signal peptide directing secretion. The Ig-like V-type domain occupies 19-125 (AKITGPTTVN…LGVKVQVTIN (107 aa)). Residues 19–165 (AKITGPTTVN…LTRSPLKSTH (147 aa)) lie on the Extracellular side of the membrane. N-linked (GlcNAc...) asparagine glycosylation is present at Asn28. Cysteines 39 and 107 form a disulfide. Residues 166–186 (FLFLFLLELPLLLSMLGTVLW) traverse the membrane as a helical segment. Topologically, residues 187–194 (VNRPQRRS) are cytoplasmic.

The protein belongs to the CD300 family. As to quaternary structure, forms complexes with the CD300 family members with exception of CD300c. N-glycosylated. As to expression, expression seems restricted to cells of myeloid lineage.

The protein localises to the cell membrane. The chain is CMRF35-like molecule 5 (CD300LD) from Homo sapiens (Human).